The primary structure comprises 642 residues: Threonine--tRNA ligase (642 aa).

The interval 239–530 is catalytic; sequence DHRKLGKELN…LTEHYAGAFP (292 aa). Residues C331, H382, and H507 each contribute to the Zn(2+) site.

The protein belongs to the class-II aminoacyl-tRNA synthetase family. As to quaternary structure, homodimer. The cofactor is Zn(2+).

Its subcellular location is the cytoplasm. The catalysed reaction is tRNA(Thr) + L-threonine + ATP = L-threonyl-tRNA(Thr) + AMP + diphosphate + H(+). Its function is as follows. Catalyzes the attachment of threonine to tRNA(Thr) in a two-step reaction: L-threonine is first activated by ATP to form Thr-AMP and then transferred to the acceptor end of tRNA(Thr). Also edits incorrectly charged L-seryl-tRNA(Thr). The polypeptide is Threonine--tRNA ligase (Lawsonia intracellularis (strain PHE/MN1-00)).